A 204-amino-acid chain; its full sequence is MALVTKLLVASRNRKKLAELRRVLDGAGLSGLTLLSLGDVSPLPETPETGVTFEDNALAKARDAFSATGLASVADDSGLEVAALGGMPGVLSARWSGRYGDDAANTALLLAQLCDVPDERRGAAFVSACALVSGSGEVVVRGEWPGTIAREPRGDGGFGYDPVFVPYGDDRTAAQLSPAEKDAVSHRGRALALLLPALRSLATG.

Substrate is bound at residue 11–16 (SRNRKK). Asp-76 (proton acceptor) is an active-site residue. Asp-76 contacts Mg(2+). Substrate is bound by residues Ser-77, 158 to 161 (FGYD), Lys-181, and 186 to 187 (HR).

Belongs to the HAM1 NTPase family. Homodimer. It depends on Mg(2+) as a cofactor.

The enzyme catalyses XTP + H2O = XMP + diphosphate + H(+). The catalysed reaction is dITP + H2O = dIMP + diphosphate + H(+). It carries out the reaction ITP + H2O = IMP + diphosphate + H(+). In terms of biological role, pyrophosphatase that catalyzes the hydrolysis of nucleoside triphosphates to their monophosphate derivatives, with a high preference for the non-canonical purine nucleotides XTP (xanthosine triphosphate), dITP (deoxyinosine triphosphate) and ITP. Seems to function as a house-cleaning enzyme that removes non-canonical purine nucleotides from the nucleotide pool, thus preventing their incorporation into DNA/RNA and avoiding chromosomal lesions. This chain is dITP/XTP pyrophosphatase, found in Mycobacterium tuberculosis (strain CDC 1551 / Oshkosh).